The chain runs to 209 residues: Uracil phosphoribosyltransferase (209 aa).

5-phospho-alpha-D-ribose 1-diphosphate is bound by residues arginine 79, arginine 104, and aspartate 131–serine 139. Uracil is bound by residues isoleucine 194 and glycine 199–alanine 201. 5-phospho-alpha-D-ribose 1-diphosphate is bound at residue aspartate 200.

It belongs to the UPRTase family. Mg(2+) is required as a cofactor.

It carries out the reaction UMP + diphosphate = 5-phospho-alpha-D-ribose 1-diphosphate + uracil. Its pathway is pyrimidine metabolism; UMP biosynthesis via salvage pathway; UMP from uracil: step 1/1. Allosterically activated by GTP. Catalyzes the conversion of uracil and 5-phospho-alpha-D-ribose 1-diphosphate (PRPP) to UMP and diphosphate. The polypeptide is Uracil phosphoribosyltransferase (Exiguobacterium sibiricum (strain DSM 17290 / CCUG 55495 / CIP 109462 / JCM 13490 / 255-15)).